Here is a 286-residue protein sequence, read N- to C-terminus: Flagellin FlaB2 (286 aa).

Belongs to the bacterial flagellin family. As to quaternary structure, the flagellum consists of an outer layer composed of repeating units of FlaA around a core that contains several antigenically related polypeptides. Interacts with FliW; a synthetic peptide of FlaB1 (residues 229-247) partially blocks binding of this protein to FliW.

It localises to the periplasmic flagellum. The protein localises to the periplasm. Component of the core of the flagella. In Treponema pallidum (strain Nichols), this protein is Flagellin FlaB2.